The following is an 85-amino-acid chain: Small ribosomal subunit protein bS20 (85 aa).

The protein belongs to the bacterial ribosomal protein bS20 family.

Its function is as follows. Binds directly to 16S ribosomal RNA. The chain is Small ribosomal subunit protein bS20 from Borreliella afzelii (strain PKo) (Borrelia afzelii).